The chain runs to 252 residues: PF03932 family protein CutC (252 aa).

This sequence belongs to the CutC family.

It localises to the cytoplasm. In Sodalis glossinidius (strain morsitans), this protein is PF03932 family protein CutC.